Here is a 178-residue protein sequence, read N- to C-terminus: Interleukin-10 (178 aa).

The first 18 residues, 1–18 (MPGSALLCCLLLLTGMRI), serve as a signal peptide directing secretion. Asn29 carries an N-linked (GlcNAc...) asparagine glycan. Intrachain disulfides connect Cys30/Cys126 and Cys80/Cys132. Asn134 carries N-linked (GlcNAc...) asparagine glycosylation.

Belongs to the IL-10 family. Homodimer. Interacts with IL10RA and IL10RB.

The protein localises to the secreted. Major immune regulatory cytokine that acts on many cells of the immune system where it has profound anti-inflammatory functions, limiting excessive tissue disruption caused by inflammation. Mechanistically, IL10 binds to its heterotetrameric receptor comprising IL10RA and IL10RB leading to JAK1 and STAT2-mediated phosphorylation of STAT3. In turn, STAT3 translocates to the nucleus where it drives expression of anti-inflammatory mediators. Targets antigen-presenting cells (APCs) such as macrophages and monocytes and inhibits their release of pro-inflammatory cytokines including granulocyte-macrophage colony-stimulating factor /GM-CSF, granulocyte colony-stimulating factor/G-CSF, IL-1 alpha, IL-1 beta, IL-6, IL-8 and TNF-alpha. Also interferes with antigen presentation by reducing the expression of MHC-class II and co-stimulatory molecules, thereby inhibiting their ability to induce T cell activation. In addition, controls the inflammatory response of macrophages by reprogramming essential metabolic pathways including mTOR signaling. In Mus musculus (Mouse), this protein is Interleukin-10 (Il10).